The sequence spans 1059 residues: MKFLLLSALLFLHSSLAWTREKHYYIGITEAVWDYASGSEEKELISVDTEQSNFYLRNGPDRIGRKYKKALYSEYTDGTFTKTIDKPAWLGFLGPVIKAEVGDKVSVHVKNFASRPYTFHAHGVTYTKANEGAIYPDNTTDFQRADDKLFPGQQYLYVLRANEPSPGEGDSNCVTRIYHSHVDAPKDIASGLIGPLILCKKGSLHKEKEENIDQEFVLMFSVVDENLSWYLEDNIKTFCSEPEKVDKDNEDFQESNRMYSINGYTFGSLPGLSMCAEDRVKWYLFGMGNEVDVHSELFHGQALTSKNYHTDIINLFPATLIDVSMVAQNPGVWMLSCQNLNHLKAGLQAFFQVRDCNKPSPDDDIQDRHVRHYYIAAEETIWDYAPSGTDTFTGENFTSLGSDSRVFFEQGATRIGGSYKKLVYREYTDDSFTNRKERGPDEEHLGILGPVIWAEVGDIIRVTFHNKGQFPLSIQPMGVRFTKENEGTYYGPDGRSSKQASHVAPKETFTYEWTVPKEMGPTYADPVCLSKMYYSGVDLTKDIFTGLIGPMKICKKGSLLADGRQKDVDKEFYLFATVFDENESLLLDDNIRMFTTAPENVDKEDEDFQESNKMHSMNGFMYGNLPGLNMCLGESIVWYLFSAGNEADVHGIYFSGNTYLSKGERRDTANLFPHKSLTLLMTPDTEGSFDVECLTTDHYTGGMKQKYTVNQCKGQFEDVTLYQGERTYYIAAVEVEWDYSPSRDWEMELHHLQEQNVSNAFLDKEEFFIGSKYKKVVYREFTDSTFREQVKRRAEEEHLGMLGPLIHADVGAKVKVVFKNMATRPYSIHAHGVKTKSSTVAPTLPGEVRTYIWQIPERSGAGTEDSPCIPWAYYSTVDRVKDLYSGLIGPLIVCRKSYVKVFNPKKKMEFSLLFLVFDENESWYLDDNINTYPDHPEKDNKDNEEFIESNKMHAINGKMFGNLQGLTMHVGDEVNWYVMAMGNEIDLHTVHFHGHSFQYKHRGIHSSDVFDFFPGTYQTLEMFPQTPGTWLLHCHVTDHIHAGMVTTYTVLPNQETKSG.

An N-terminal signal peptide occupies residues 1 to 19; sequence MKFLLLSALLFLHSSLAWT. 6 consecutive Plastocyanin-like domains span residues 20–199, 208–356, 369–554, 564–712, 724–894, and 902–1055; these read REKH…LILC, KEEN…VRDC, HVRH…MKIC, RQKD…VNQC, GERT…LIVC, and FNPK…PNQE. 3 residues coordinate Na(+): Tyr-55, Gly-64, and Tyr-67. The Cu(2+) site is built by His-120 and His-122. His-120 is an O2 binding site. Lys-128 lines the Ca(2+) pocket. A glycan (N-linked (GlcNAc...) asparagine) is linked at Asn-138. 3 residues coordinate Ca(2+): Gln-143, Asp-146, and Asp-147. A disulfide bridge links Cys-173 with Cys-199. Cu(2+) is bound by residues His-179 and His-181. Residue His-179 participates in O2 binding. Asn-226 carries N-linked (GlcNAc...) asparagine glycosylation. Residue Ser-255 coordinates Na(+). Cys-275 and Cys-356 are oxidised to a cystine. Cu(2+)-binding residues include His-294, Cys-337, and His-342. Residue Asn-396 is glycosylated (N-linked (GlcNAc...) asparagine). Phe-407, Gly-416, and Tyr-419 together coordinate Na(+). A disulfide bridge links Cys-528 with Cys-554. Asn-582 carries N-linked (GlcNAc...) asparagine glycosylation. Ser-611 serves as a coordination point for Na(+). Cysteines 631 and 712 form a disulfide. Cu(2+)-binding residues include His-650, Cys-693, His-698, and Met-703. Cys-693 (nucleophile; for glutathione peroxidase activity) is an active-site residue. Asn-756 is a glycosylation site (N-linked (GlcNAc...) asparagine). Residues Phe-761, Gly-770, and Tyr-773 each contribute to the Na(+) site. Cys-868 and Cys-894 are disulfide-bonded. The N-linked (GlcNAc...) asparagine glycan is linked to Asn-920. Ser-949 contributes to the Na(+) binding site. Residues His-988, His-991, His-993, His-1033, Cys-1034, His-1035, His-1039, and Met-1044 each contribute to the Cu(2+) site. O2-binding residues include His-991 and His-993. His-1035 provides a ligand contact to O2.

The protein belongs to the multicopper oxidase family. As to quaternary structure, found in a complex with MPO and LTF; interacts directly with MPO and LTF, which allows Fe(3+) incorporation into LTF, activation of CP ferroxidase activity and protection of CP antioxidant properties by MPO. Requires Cu(2+) as cofactor. As to expression, synthesized in liver and secreted into the plasma. Also choroid plexus, yolk sac, placenta, and testis; not in stomach and small intestine. Fetal lung and liver.

The protein resides in the secreted. The catalysed reaction is 4 Fe(2+) + O2 + 4 H(+) = 4 Fe(3+) + 2 H2O. The enzyme catalyses 4 Cu(+) + O2 + 4 H(+) = 4 Cu(2+) + 2 H2O. It catalyses the reaction a hydroperoxide + 2 glutathione = an alcohol + glutathione disulfide + H2O. It carries out the reaction 4 nitric oxide + O2 + 2 H2O = 4 nitrite + 4 H(+). The catalysed reaction is 2 glutathione + H2O2 = glutathione disulfide + 2 H2O. Functionally, multifunctional blue, copper-binding (6-7 atoms per molecule) glycoprotein. It has ferroxidase activity oxidizing Fe(2+) to Fe(3+) without releasing radical oxygen species. It is involved in iron transport across the cell membrane. Copper ions provide a large number of enzymatic activites. Oxidizes highly toxic ferrous ions to the ferric state for further incorporation onto apo-transferrins, catalyzes Cu(+) oxidation and promotes the oxidation of biogenic amines such as norepinephrin and serotonin. Provides Cu(2+) ions for the ascorbate-mediated deaminase degradation of the heparan sulfate chains of GPC1. Has glutathione peroxidase-like activity, can remove both hydrogen peroxide and lipid hydroperoxide in the presence of thiols. Also shows NO-oxidase and NO2 synthase activities that determine endocrine NO homeostasis. The protein is Ceruloplasmin (Cp) of Rattus norvegicus (Rat).